A 462-amino-acid chain; its full sequence is Cleavage and polyadenylation specificity factor subunit 7 (462 aa).

Disordered stretches follow at residues 34-68 and 161-213; these read VLTA…NKTP and TRQN…PSVL. The segment covering 50 to 62 has biased composition (pro residues); it reads EPPPPVRQEPAPK. Positions 82–162 constitute an RRM domain; it reads AAVYVGSFSW…EKVDVRPATR (81 aa). The segment covering 181-190 has biased composition (basic and acidic residues); sequence HSRDSSDSAD. Residue Thr194 is modified to Phosphothreonine. Ser196 carries the phosphoserine modification. Residue Lys345 forms a Glycyl lysine isopeptide (Lys-Gly) (interchain with G-Cter in SUMO2) linkage. The interval 400 to 462 is disordered; that stretch reads SVGASGSSSR…HRDRERDRHH (63 aa). 2 positions are modified to phosphoserine: Ser404 and Ser414. The arg/Ser-rich domain stretch occupies residues 409 to 460; that stretch reads RKRHRSRERSPSRSRESSRRHRDLLHNEDRHDDYFQERNREHERHRDRERDR. 2 stretches are compositionally biased toward basic and acidic residues: residues 416-425 and 432-462; these read ERSPSRSRES and LLHN…DRHH.

This sequence belongs to the RRM CPSF6/7 family. As to quaternary structure, component of the cleavage factor Im (CFIm) complex which is a heterotetramer composed of two subunits of NUDT21/CPSF5 and two subunits of CPSF6 or CPSF7 or a heterodimer of CPSF6 and CPSF7. The cleavage factor Im (CFIm) complex associates with the CPSF and CSTF complexes to promote the assembly of the core mRNA 3'-processing machinery. Interacts with NUDT21/CPSF5. Interacts (via Arg/Ser-rich domain) with FIP1L1 (preferentially via unphosphorylated form and Arg/Glu/Asp-rich region); this interaction mediates, at least in part, the interaction between the CFIm and CPSF complexes and may be inhibited by CPSF7 hyper-phosphorylation. In terms of processing, phosphorylated. Asymmetrically dimethylated on arginine residues by PRMT1.

The protein resides in the nucleus. It localises to the cytoplasm. Component of the cleavage factor Im (CFIm) complex that functions as an activator of the pre-mRNA 3'-end cleavage and polyadenylation processing required for the maturation of pre-mRNA into functional mRNAs. CFIm contributes to the recruitment of multiprotein complexes on specific sequences on the pre-mRNA 3'-end, so called cleavage and polyadenylation signals (pA signals). Most pre-mRNAs contain multiple pA signals, resulting in alternative cleavage and polyadenylation (APA) producing mRNAs with variable 3'-end formation. The CFIm complex acts as a key regulator of cleavage and polyadenylation site choice during APA through its binding to 5'-UGUA-3' elements localized in the 3'-untranslated region (UTR) for a huge number of pre-mRNAs. CPSF7 activates directly the mRNA 3'-processing machinery. Binds to pA signals in RNA substrates. The protein is Cleavage and polyadenylation specificity factor subunit 7 of Rattus norvegicus (Rat).